A 1133-amino-acid polypeptide reads, in one-letter code: Error-prone DNA polymerase (1133 aa).

This sequence belongs to the DNA polymerase type-C family. DnaE2 subfamily.

Its subcellular location is the cytoplasm. It catalyses the reaction DNA(n) + a 2'-deoxyribonucleoside 5'-triphosphate = DNA(n+1) + diphosphate. Its function is as follows. DNA polymerase involved in damage-induced mutagenesis and translesion synthesis (TLS). It is not the major replicative DNA polymerase. The polypeptide is Error-prone DNA polymerase (Anaeromyxobacter sp. (strain K)).